Consider the following 349-residue polypeptide: MPISVLVVDDSALIRSLLKEIIQADPELRLVGCAPDAFVARDLIKQHAPDVISLDVEMPRMDGLTFLDKLMKARPTPVLMISSLTERGSEATLRALELGAVDFIAKPRLGIAEGMQAYAEEIRAKLKTVARARLRRRAADAPAPPESAAPLLSTEKIIALGASTGGTEALKEVLLGLPAHSPGVVITQHMPPGFTRSFAERLDRLTRLSVSEARDGDRILPGHALVAPGDHHMEVQRSGANYVVRLNRQAQVNGHRPAVDVMFESLARCAGRNLLAGLLTGMGKDGARGLLAIRQAGGYTLAQDEATCVVYGMPREAVELGAAEDVLPLERIAAALLQQAARRGSGNRL.

Positions 4 to 121 constitute a Response regulatory domain; it reads SVLVVDDSAL…AEGMQAYAEE (118 aa). 4-aspartylphosphate is present on aspartate 55. A CheB-type methylesterase domain is found at 151–343; the sequence is LLSTEKIIAL…AALLQQAARR (193 aa). Residues serine 163, histidine 189, and aspartate 285 contribute to the active site.

The protein belongs to the CheB family. In terms of assembly, interacts with the C-terminal pentapeptide GWEEF of McpB. Phosphorylated by CheA. Phosphorylation of the N-terminal regulatory domain activates the methylesterase activity.

The protein resides in the cytoplasm. It catalyses the reaction [protein]-L-glutamate 5-O-methyl ester + H2O = L-glutamyl-[protein] + methanol + H(+). It carries out the reaction L-glutaminyl-[protein] + H2O = L-glutamyl-[protein] + NH4(+). Involved in chemotaxis. Part of a chemotaxis signal transduction system that modulates chemotaxis in response to various stimuli. Catalyzes the demethylation of specific methylglutamate residues introduced into the chemoreceptors (methyl-accepting chemotaxis proteins or MCP) by CheR. Also mediates the irreversible deamidation of specific glutamine residues to glutamic acid. Acts on the methyl-accepting chemotaxis protein McpB. May be involved in a specific chemotactic response, which takes place during infection and is required for P.aeruginosa pathogenicity. In Pseudomonas aeruginosa (strain ATCC 15692 / DSM 22644 / CIP 104116 / JCM 14847 / LMG 12228 / 1C / PRS 101 / PAO1), this protein is Protein-glutamate methylesterase/protein-glutamine glutaminase 2.